The chain runs to 283 residues: Pantothenate synthetase (283 aa).

Position 30–37 (30–37 (MGNLHDGH)) interacts with ATP. H37 acts as the Proton donor in catalysis. Q61 provides a ligand contact to (R)-pantoate. A beta-alanine-binding site is contributed by Q61. 149–152 (GEKD) serves as a coordination point for ATP. Q155 provides a ligand contact to (R)-pantoate. 186 to 189 (LSSR) is a binding site for ATP.

Belongs to the pantothenate synthetase family. In terms of assembly, homodimer.

It localises to the cytoplasm. It catalyses the reaction (R)-pantoate + beta-alanine + ATP = (R)-pantothenate + AMP + diphosphate + H(+). Its pathway is cofactor biosynthesis; (R)-pantothenate biosynthesis; (R)-pantothenate from (R)-pantoate and beta-alanine: step 1/1. In terms of biological role, catalyzes the condensation of pantoate with beta-alanine in an ATP-dependent reaction via a pantoyl-adenylate intermediate. The polypeptide is Pantothenate synthetase (Escherichia coli O6:H1 (strain CFT073 / ATCC 700928 / UPEC)).